The primary structure comprises 206 residues: Ras-related protein RABG3e (206 aa).

15–22 contacts GTP; that stretch reads GDSGVGKT. The short motif at 37–45 is the Effector region element; the sequence is YKATIGADF. GTP-binding positions include 63-67, 125-128, and 158-159; these read DTAGQ, NKID, and SA. S-geranylgeranyl cysteine attachment occurs at residues Cys-204 and Cys-206. Cys-206 is subject to Cysteine methyl ester.

This sequence belongs to the small GTPase superfamily. Rab family.

Its subcellular location is the cell membrane. Its function is as follows. Intracellular vesicle trafficking and protein transport. May play a role in adaptation to stress by recylcing macromolecules in specific cellular compartments. The polypeptide is Ras-related protein RABG3e (RABG3E) (Arabidopsis thaliana (Mouse-ear cress)).